The following is a 325-amino-acid chain: Dimethylallyltranstransferase (325 aa).

Residues arginine 54 and histidine 84 each contribute to the isopentenyl diphosphate site. 2 residues coordinate Mg(2+): aspartate 91 and aspartate 95. The DDXXD motif signature appears at 91-95 (DRVVD). Arginine 101 provides a ligand contact to isopentenyl diphosphate. Positions 217 to 221 (RDIIA) match the DDXXD motif motif.

It belongs to the FPP/GGPP synthase family. Mg(2+) is required as a cofactor.

The catalysed reaction is isopentenyl diphosphate + dimethylallyl diphosphate = (2E)-geranyl diphosphate + diphosphate. It participates in isoprenoid biosynthesis; geranyl diphosphate biosynthesis; geranyl diphosphate from dimethylallyl diphosphate and isopentenyl diphosphate: step 1/1. In terms of biological role, catalyzes the addition of isopentenyl diphosphate (IPP) onto dimethylallyl diphosphate (DMAPP) to form geranyl pyrophosphate (GPP). Is probably involved in the biosynthesis of decaprenyl diphosphate, which is required for mycobacterial cell wall synthesis. Could be required for host endothelial-cell invasion and/or intracellular survival. The polypeptide is Dimethylallyltranstransferase (Mycobacterium tuberculosis (strain ATCC 25618 / H37Rv)).